The primary structure comprises 475 residues: Aspartyl/glutamyl-tRNA(Asn/Gln) amidotransferase subunit B (475 aa).

The protein belongs to the GatB/GatE family. GatB subfamily. In terms of assembly, heterotrimer of A, B and C subunits.

The enzyme catalyses L-glutamyl-tRNA(Gln) + L-glutamine + ATP + H2O = L-glutaminyl-tRNA(Gln) + L-glutamate + ADP + phosphate + H(+). The catalysed reaction is L-aspartyl-tRNA(Asn) + L-glutamine + ATP + H2O = L-asparaginyl-tRNA(Asn) + L-glutamate + ADP + phosphate + 2 H(+). Functionally, allows the formation of correctly charged Asn-tRNA(Asn) or Gln-tRNA(Gln) through the transamidation of misacylated Asp-tRNA(Asn) or Glu-tRNA(Gln) in organisms which lack either or both of asparaginyl-tRNA or glutaminyl-tRNA synthetases. The reaction takes place in the presence of glutamine and ATP through an activated phospho-Asp-tRNA(Asn) or phospho-Glu-tRNA(Gln). The sequence is that of Aspartyl/glutamyl-tRNA(Asn/Gln) amidotransferase subunit B from Thermoanaerobacter pseudethanolicus (strain ATCC 33223 / 39E) (Clostridium thermohydrosulfuricum).